A 465-amino-acid polypeptide reads, in one-letter code: 2-methylcitrate synthase, mitochondrial (465 aa).

Residues 1–29 (MAMTMRSTRHASKLAQTARLALTNSRRYS) constitute a mitochondrion transit peptide. Positions 74 and 192 each coordinate CoA. H269 lines the oxaloacetate pocket. Residue L304 participates in CoA binding. Residue H305 is part of the active site. Positions 346, 348, and 349 each coordinate CoA. Oxaloacetate contacts are provided by H351 and R360. H351 is an active-site residue. Residues T400, K401, and N406 each contribute to the CoA site. D408 is an active-site residue. Oxaloacetate contacts are provided by R434 and R454.

The protein belongs to the citrate synthase family. Homodimer.

It localises to the mitochondrion matrix. It catalyses the reaction propanoyl-CoA + oxaloacetate + H2O = (2S,3S)-2-methylcitrate + CoA + H(+). The enzyme catalyses oxaloacetate + acetyl-CoA + H2O = citrate + CoA + H(+). It participates in organic acid metabolism; propanoate degradation. Functionally, component of the methylcitrate cycle that catalyzes the synthesis of (2S,3S)-2-methylcitrate from propionyl-CoA and oxaloacetate. Plays an important role in detoxification of propionyl-CoA, an inhibitor of both primary and secondary metabolism. Also has citrate synthase activity using as substrates acetyl-CoA and oxaloacetate. Plays a key role in the estabishment of invasive pulmonary aspergillosis. This is 2-methylcitrate synthase, mitochondrial from Aspergillus fumigatus (strain CBS 144.89 / FGSC A1163 / CEA10) (Neosartorya fumigata).